The primary structure comprises 8903 residues: Nonribosomal peptide synthetase vlms (8903 aa).

The 74-residue stretch at 11–84 (GSCRTTLGKV…ELADSIDEQN (74 aa)) folds into the Carrier 1 domain. Residues 13–81 (CRTTLGKVAA…TLAELADSID (69 aa)) form a thiolation (T) domain 1 region. Serine 45 is modified (O-(pantetheine 4'-phosphoryl)serine). Adenylation (A) domain stretches follow at residues 59 to 736 (GIWV…SHLP) and 989 to 1386 (MAAQ…IKIR). The condensation (C) domain 1 stretch occupies residues 572–953 (VPHQLDTEKL…FLLDGVNMSI (382 aa)). The 77-residue stretch at 1524–1600 (SSMSTVEQEL…QLALAAESQA (77 aa)) folds into the Carrier 2 domain. The interval 1529–1597 (VEQELRQIWS…TIPQLALAAE (69 aa)) is thiolation (T) domain 2. O-(pantetheine 4'-phosphoryl)serine is present on serine 1561. The epimerase (E) domain 1 stretch occupies residues 1613–2050 (FPLSPIQKMY…TVKELAAVSA (438 aa)). Residues 2091–2523 (DILPCSPIQQ…LLSVSEENKL (433 aa)) are condensation (C) domain 2. The tract at residues 2546-2943 (MSSHADATAI…GRQDSQVKIR (398 aa)) is adenylation (A) domain 2. Residues 3084 to 3160 (LFTTAIERQL…ELALQAKMVD (77 aa)) form the Carrier 3 domain. Residues 3089 to 3157 (IERQLRQVWS…TIPELALQAK (69 aa)) form a thiolation (T) domain 3 region. O-(pantetheine 4'-phosphoryl)serine is present on serine 3121. The interval 3174–3614 (FALSPIQQMY…AIKSLVEELM (441 aa)) is epimerase (E) domain 2. The tract at residues 3655 to 4093 (EDILPCSPMQ…LMSTKDIQQL (439 aa)) is condensation (C) domain 3. The tract at residues 4114–4512 (ERLNTQPESM…GRIDTQIKIR (399 aa)) is adenylation (A) domain 3. Residues 4649–4725 (APRTTMEKKL…DLAEATELKC (77 aa)) form the Carrier 4 domain. The tract at residues 4654-4722 (MEKKLRDLFA…ILADLAEATE (69 aa)) is thiolation (T) domain 4. Serine 4686 carries the O-(pantetheine 4'-phosphoryl)serine modification. Residues 4775-5191 (EDVYPCSPLQ…AQLQMLSEED (417 aa)) form a condensation (C) domain 4 region. Residues 5216-5614 (ETMTSQPDAP…GRRDTQVKIR (399 aa)) are adenylation (A) domain 4. The 77-residue stretch at 5753 to 5829 (APTTAMEKRL…DLAQELEQRH (77 aa)) folds into the Carrier 5 domain. The interval 5758–5826 (MEKRLQNLFC…RLGDLAQELE (69 aa)) is thiolation (T) domain 5. Serine 5790 is subject to O-(pantetheine 4'-phosphoryl)serine. Residue glutamate 5875 is a region of interest, condensation (C) domain 5. The tract at residues 6311 to 6702 (EEQMSLRPSE…GRMDGQIKIR (392 aa)) is adenylation (A) domain 5. Residues 6836-6912 (SSATNTERQL…ELAATLEVMD (77 aa)) enclose the Carrier 6 domain. The tract at residues 6841–6909 (TERQLRQIWS…TIPELAATLE (69 aa)) is thiolation (T) domain 6. Position 6873 is an O-(pantetheine 4'-phosphoryl)serine (serine 6873). The tract at residues 6923–7349 (GFFELSPIQR…YGRTIKTLVE (427 aa)) is epimerase (E) domain 3. The condensation (C) domain 6 stretch occupies residues 7391–7823 (EDILPCSPIQ…LVLTNDEAQI (433 aa)). The interval 7844 to 8240 (EQMARKPEAQ…LDRIGTQVKI (397 aa)) is adenylation (A) domain 6. The Carrier 7 domain occupies 8368–8444 (APISATEAVF…AMAACVSDVS (77 aa)). Positions 8369-8441 (PISATEAVFC…VLHAMAACVS (73 aa)) are thiolation (T) domain 7. Serine 8405 is subject to O-(pantetheine 4'-phosphoryl)serine. The interval 8482–8897 (DVLPTTEFQT…MENPRSTVGH (416 aa)) is condensation (C) domain 7.

This sequence belongs to the NRP synthetase family.

It functions in the pathway secondary metabolite biosynthesis. In terms of biological role, nonribosomal peptide synthetase; part of the gene cluster that mediates the biosynthesis of verlamelin, a lipopeptide that exhibits antifungal activity against plant pathogenic fungi. Verlamelin is a cyclic hexadepsipeptide and is bridged by ester bonding between a 5-hydroxytetradecanoic acid moiety and a carboxyl group on the terminal Val of amide-bonded tetradecanoyl-hexapeptide D-allo-Thr-D-Ala-L-Pro-L-Gln-D-Tyr-L-Val. VlmA and vlmB are altogether regarded as essential components in the biosynthesis of 5-hydroxytetradecanoic acid. VlmA catalyzes the hydroxylation at position C5 of tetradecanoic acid produced in primary metabolism, while the precise function of vlmB still remains to be solved. To be loaded onto the waiting NRPS, 5-hydroxytetradecanoic acid is activated in the form of acyladenylate by the AMP-dependent ligase vlmC. VlmS seems to accept the fatty-acyl intermediate onto the initial module to further elongate amino acid residues by the downstream modules. In addition, in the last module at its C-terminus, vlmS contains a surplus condensation (C) domain that may be involved in cyclization, the last step to form verlamelin. The polypeptide is Nonribosomal peptide synthetase vlms (Lecanicillium sp).